A 150-amino-acid chain; its full sequence is Ribosomal RNA large subunit methyltransferase H (150 aa).

S-adenosyl-L-methionine-binding positions include Ala-100 and 118–123 (LSEMTF).

The protein belongs to the RNA methyltransferase RlmH family. Homodimer.

It is found in the cytoplasm. The enzyme catalyses pseudouridine(1915) in 23S rRNA + S-adenosyl-L-methionine = N(3)-methylpseudouridine(1915) in 23S rRNA + S-adenosyl-L-homocysteine + H(+). Specifically methylates the pseudouridine at position 1915 (m3Psi1915) in 23S rRNA. The protein is Ribosomal RNA large subunit methyltransferase H of Helicobacter pylori (strain P12).